A 188-amino-acid polypeptide reads, in one-letter code: Guanylate kinase (188 aa).

The region spanning 2–183 (TKLIIISAPS…CVEQIRKAIA (182 aa)) is the Guanylate kinase-like domain. Residue 9-16 (APSGTGKS) participates in ATP binding.

Belongs to the guanylate kinase family.

The protein resides in the cytoplasm. It catalyses the reaction GMP + ATP = GDP + ADP. Its function is as follows. Essential for recycling GMP and indirectly, cGMP. The chain is Guanylate kinase from Porphyromonas gingivalis (strain ATCC BAA-308 / W83).